We begin with the raw amino-acid sequence, 183 residues long: Apo-citrate lyase phosphoribosyl-dephospho-CoA transferase (183 aa).

Belongs to the CitX family.

The enzyme catalyses apo-[citrate lyase ACP] + 2'-(5''-triphospho-alpha-D-ribosyl)-3'-dephospho-CoA = holo-[citrate lyase ACP] + diphosphate. Functionally, transfers 2-(5''-triphosphoribosyl)-3'-dephosphocoenzyme-A on a serine residue to the apo-acyl carrier protein (gamma chain) of the citrate lyase to yield holo-acyl carrier protein. The chain is Apo-citrate lyase phosphoribosyl-dephospho-CoA transferase from Escherichia coli O9:H4 (strain HS).